The chain runs to 484 residues: Probable glycine dehydrogenase (decarboxylating) subunit 2 (484 aa).

Lys-264 bears the N6-(pyridoxal phosphate)lysine mark.

This sequence belongs to the GcvP family. C-terminal subunit subfamily. In terms of assembly, the glycine cleavage system is composed of four proteins: P, T, L and H. In this organism, the P 'protein' is a heterodimer of two subunits. Requires pyridoxal 5'-phosphate as cofactor.

It catalyses the reaction N(6)-[(R)-lipoyl]-L-lysyl-[glycine-cleavage complex H protein] + glycine + H(+) = N(6)-[(R)-S(8)-aminomethyldihydrolipoyl]-L-lysyl-[glycine-cleavage complex H protein] + CO2. The glycine cleavage system catalyzes the degradation of glycine. The P protein binds the alpha-amino group of glycine through its pyridoxal phosphate cofactor; CO(2) is released and the remaining methylamine moiety is then transferred to the lipoamide cofactor of the H protein. The sequence is that of Probable glycine dehydrogenase (decarboxylating) subunit 2 from Legionella pneumophila (strain Lens).